The following is a 249-amino-acid chain: 5'-nucleotidase SurE (249 aa).

Residues D9, D10, S40, and N92 each contribute to the a divalent metal cation site.

The protein belongs to the SurE nucleotidase family. A divalent metal cation is required as a cofactor.

The protein localises to the cytoplasm. The enzyme catalyses a ribonucleoside 5'-phosphate + H2O = a ribonucleoside + phosphate. Its function is as follows. Nucleotidase that shows phosphatase activity on nucleoside 5'-monophosphates. This Shewanella putrefaciens (strain CN-32 / ATCC BAA-453) protein is 5'-nucleotidase SurE.